We begin with the raw amino-acid sequence, 511 residues long: Probable DNA ligase (511 aa).

E209 contacts ATP. Catalysis depends on K211, which acts as the N6-AMP-lysine intermediate. ATP contacts are provided by R216, R231, E260, F299, R371, and K377.

The protein belongs to the ATP-dependent DNA ligase family. Requires Mg(2+) as cofactor.

It carries out the reaction ATP + (deoxyribonucleotide)n-3'-hydroxyl + 5'-phospho-(deoxyribonucleotide)m = (deoxyribonucleotide)n+m + AMP + diphosphate.. Its function is as follows. DNA ligase that seals nicks in double-stranded DNA during DNA replication, DNA recombination and DNA repair. In Mycolicibacterium gilvum (strain PYR-GCK) (Mycobacterium gilvum (strain PYR-GCK)), this protein is Probable DNA ligase.